The chain runs to 330 residues: 2-methyl-6-phytyl-1,4-hydroquinone methyltransferase 1, chloroplastic (330 aa).

A chloroplast-targeting transit peptide spans 1–45 (MKEMVSSSTFRAPGGLGFLGPSKIGLIPLRNRSGVRSRVKYIAPK). Residues 46 to 295 (CAVSSARPAS…DVEKPVNPFT (250 aa)) are Chloroplast intermembrane-facing. An SAM motif I region spans residues 107–116 (VVDVGGGTGF). The SAM motif II stretch occupies residues 152-165 (VNIIEGDAEDLPYP). The tract at residues 193–206 (RVLKLGGVACLIGP) is SAM motif III. A helical transmembrane segment spans residues 296–316 (FIFRFVMGTICASYYVLVPIY). At 317 to 330 (MWMKDQIVPKDQPI) the chain is on the stromal side.

It belongs to the class I-like SAM-binding methyltransferase superfamily. MPBQ/MBSQ MT family.

The protein localises to the plastid. Its subcellular location is the chloroplast inner membrane. The catalysed reaction is 2-methyl-6-phytyl-1,4-benzene-1,4-diol + S-adenosyl-L-methionine = 2,3-dimethyl-6-phytylbenzene-1,4-diol + S-adenosyl-L-homocysteine + H(+). It carries out the reaction 2-methyl-6-(all-trans-nonaprenyl)benzene-1,4-diol + S-adenosyl-L-methionine = plastoquinol-9 + S-adenosyl-L-homocysteine + H(+). The enzyme catalyses 6-geranylgeranyl-2-methylbenzene-1,4-diol + S-adenosyl-L-methionine = 6-geranylgeranyl-2,3-dimethylbenzene-1,4-diol + S-adenosyl-L-homocysteine + H(+). It functions in the pathway cofactor biosynthesis; tocopherol biosynthesis. Its function is as follows. Involved in a key methylation step in both tocopherols (vitamin E) and plastoquinone synthesis. Catalyzes the conversion of 2-methyl-6-phytyl-1,4-hydroquinone (MPBQ) to 2,3-dimethyl-6-phytyl-1,4-hydroquinone (DMPQ, a substrate for tocopherol cyclase), and 2-methyl-6-solanyl-1,4-benzoquinone (MSBQ) to plastoquinone. The sequence is that of 2-methyl-6-phytyl-1,4-hydroquinone methyltransferase 1, chloroplastic (ARSM2) from Oryza sativa subsp. japonica (Rice).